A 169-amino-acid polypeptide reads, in one-letter code: NADH-quinone oxidoreductase subunit B (169 aa).

[4Fe-4S] cluster is bound by residues C42, C43, C107, and C136.

This sequence belongs to the complex I 20 kDa subunit family. In terms of assembly, NDH-1 is composed of 14 different subunits. Subunits NuoB, C, D, E, F, and G constitute the peripheral sector of the complex. [4Fe-4S] cluster serves as cofactor.

It is found in the cell inner membrane. The catalysed reaction is a quinone + NADH + 5 H(+)(in) = a quinol + NAD(+) + 4 H(+)(out). Its function is as follows. NDH-1 shuttles electrons from NADH, via FMN and iron-sulfur (Fe-S) centers, to quinones in the respiratory chain. The immediate electron acceptor for the enzyme in this species is believed to be ubiquinone. Couples the redox reaction to proton translocation (for every two electrons transferred, four hydrogen ions are translocated across the cytoplasmic membrane), and thus conserves the redox energy in a proton gradient. In Wolinella succinogenes (strain ATCC 29543 / DSM 1740 / CCUG 13145 / JCM 31913 / LMG 7466 / NCTC 11488 / FDC 602W) (Vibrio succinogenes), this protein is NADH-quinone oxidoreductase subunit B.